Reading from the N-terminus, the 341-residue chain is General L-amino acid-binding periplasmic protein AapJ (341 aa).

An N-terminal signal peptide occupies residues 1–23 (MKNKLLSAAIGAAVLAVGASAAS).

It belongs to the bacterial solute-binding protein 3 family. The complex is composed of two ATP-binding proteins (AapP), two transmembrane proteins (AapM and AapQ) and a solute-binding protein (AapJ).

The protein resides in the periplasm. Its function is as follows. Part of the ABC transporter complex AapJQMP involved in uptake of L-amino acids. Affects the efflux of these amino acids as well. Essential for the development of bacteroids, the differentiated legume-symbiotic forms of this bacterium, and for the effective N(2) fixation by them. The chain is General L-amino acid-binding periplasmic protein AapJ (aapJ) from Rhizobium johnstonii (strain DSM 114642 / LMG 32736 / 3841) (Rhizobium leguminosarum bv. viciae).